The following is a 491-amino-acid chain: Aspartyl/glutamyl-tRNA(Asn/Gln) amidotransferase subunit B (491 aa).

Belongs to the GatB/GatE family. GatB subfamily. Heterotrimer of A, B and C subunits.

It catalyses the reaction L-glutamyl-tRNA(Gln) + L-glutamine + ATP + H2O = L-glutaminyl-tRNA(Gln) + L-glutamate + ADP + phosphate + H(+). The enzyme catalyses L-aspartyl-tRNA(Asn) + L-glutamine + ATP + H2O = L-asparaginyl-tRNA(Asn) + L-glutamate + ADP + phosphate + 2 H(+). Functionally, allows the formation of correctly charged Asn-tRNA(Asn) or Gln-tRNA(Gln) through the transamidation of misacylated Asp-tRNA(Asn) or Glu-tRNA(Gln) in organisms which lack either or both of asparaginyl-tRNA or glutaminyl-tRNA synthetases. The reaction takes place in the presence of glutamine and ATP through an activated phospho-Asp-tRNA(Asn) or phospho-Glu-tRNA(Gln). The chain is Aspartyl/glutamyl-tRNA(Asn/Gln) amidotransferase subunit B from Burkholderia multivorans (strain ATCC 17616 / 249).